Here is a 491-residue protein sequence, read N- to C-terminus: Glutamyl-tRNA(Gln) amidotransferase subunit A (491 aa).

Residues lysine 79 and serine 158 each act as charge relay system in the active site. Serine 182 functions as the Acyl-ester intermediate in the catalytic mechanism.

Belongs to the amidase family. GatA subfamily. In terms of assembly, heterotrimer of A, B and C subunits.

The catalysed reaction is L-glutamyl-tRNA(Gln) + L-glutamine + ATP + H2O = L-glutaminyl-tRNA(Gln) + L-glutamate + ADP + phosphate + H(+). In terms of biological role, allows the formation of correctly charged Gln-tRNA(Gln) through the transamidation of misacylated Glu-tRNA(Gln) in organisms which lack glutaminyl-tRNA synthetase. The reaction takes place in the presence of glutamine and ATP through an activated gamma-phospho-Glu-tRNA(Gln). The sequence is that of Glutamyl-tRNA(Gln) amidotransferase subunit A from Anaplasma phagocytophilum (strain HZ).